Reading from the N-terminus, the 327-residue chain is Fructose-1,6-bisphosphatase class 1 (327 aa).

Mg(2+)-binding residues include E84, D103, L105, and D106. Residues D106–S109, N198, and K264 contribute to the substrate site. E270 is a binding site for Mg(2+).

This sequence belongs to the FBPase class 1 family. As to quaternary structure, homotetramer. The cofactor is Mg(2+).

The protein resides in the cytoplasm. It carries out the reaction beta-D-fructose 1,6-bisphosphate + H2O = beta-D-fructose 6-phosphate + phosphate. It participates in carbohydrate biosynthesis; gluconeogenesis. The chain is Fructose-1,6-bisphosphatase class 1 from Psychrobacter cryohalolentis (strain ATCC BAA-1226 / DSM 17306 / VKM B-2378 / K5).